A 626-amino-acid chain; its full sequence is Polypeptide N-acetylgalactosaminyltransferase 5 (626 aa).

The Cytoplasmic segment spans residues 1–11 (MIIFKKKAILK). The chain crosses the membrane as a helical; Signal-anchor for type II membrane protein span at residues 12-31 (VLLLVPVFWICSLIFFAATS). N-linked (GlcNAc...) asparagine glycosylation is present at Asn-32. Over 32 to 626 (NDSSQIGSNN…AIEHGAKPPS (595 aa)) the chain is Lumenal. 5 cysteine pairs are disulfide-bonded: Cys-165–Cys-399, Cys-390–Cys-466, Cys-502–Cys-521, Cys-544–Cys-557, and Cys-583–Cys-598. A catalytic subdomain A region spans residues 174–284 (LPRTSVIICF…EGWMEPLLDR (111 aa)). Positions 215 and 245 each coordinate substrate. Mn(2+) is bound at residue Asp-268. Ser-269 contributes to the substrate binding site. His-270 is a binding site for Mn(2+). N-linked (GlcNAc...) asparagine glycosylation occurs at Asn-338. The segment at 345 to 407 (PVRSPTMAGG…PCSHVGHVFR (63 aa)) is catalytic subdomain B. Trp-376 is a substrate binding site. His-404 is a binding site for Mn(2+). Residues Arg-407 and Tyr-412 each contribute to the substrate site. Residues 488-610 (AKGEVRNSAV…DDPYQHWKFK (123 aa)) enclose the Ricin B-type lectin domain.

It belongs to the glycosyltransferase 2 family. GalNAc-T subfamily. Requires Mn(2+) as cofactor.

The protein resides in the golgi apparatus membrane. The catalysed reaction is L-seryl-[protein] + UDP-N-acetyl-alpha-D-galactosamine = a 3-O-[N-acetyl-alpha-D-galactosaminyl]-L-seryl-[protein] + UDP + H(+). The enzyme catalyses L-threonyl-[protein] + UDP-N-acetyl-alpha-D-galactosamine = a 3-O-[N-acetyl-alpha-D-galactosaminyl]-L-threonyl-[protein] + UDP + H(+). The protein operates within protein modification; protein glycosylation. In terms of biological role, catalyzes the initial reaction in O-linked oligosaccharide biosynthesis, the transfer of an N-acetyl-D-galactosamine residue to a serine or threonine residue on the protein receptor. In Caenorhabditis elegans, this protein is Polypeptide N-acetylgalactosaminyltransferase 5 (gly-5).